An 85-amino-acid polypeptide reads, in one-letter code: UPF0291 protein SEQ_0545 (85 aa).

A disordered region spans residues 62–85; that stretch reads TPEKLRQVQREKGLHGRSLDDPES.

This sequence belongs to the UPF0291 family.

It is found in the cytoplasm. In Streptococcus equi subsp. equi (strain 4047), this protein is UPF0291 protein SEQ_0545.